We begin with the raw amino-acid sequence, 1166 residues long: Pesticidal crystal protein Cry1Ga (1166 aa).

This sequence belongs to the delta endotoxin family.

Promotes colloidosmotic lysis by binding to the midgut epithelial cells of insects. The polypeptide is Pesticidal crystal protein Cry1Ga (cry1Ga) (Bacillus thuringiensis).